Reading from the N-terminus, the 443-residue chain is Methyl-coenzyme M reductase subunit beta (443 aa).

Y367 contacts coenzyme M. Coenzyme B is bound at residue G369.

The protein belongs to the methyl-coenzyme M reductase beta subunit family. As to quaternary structure, MCR is a hexamer of two alpha, two beta, and two gamma chains, forming a dimer of heterotrimers. The cofactor is coenzyme F430.

The protein resides in the cytoplasm. The enzyme catalyses coenzyme B + methyl-coenzyme M = methane + coenzyme M-coenzyme B heterodisulfide. It participates in one-carbon metabolism; methyl-coenzyme M reduction; methane from methyl-coenzyme M: step 1/1. Component of the methyl-coenzyme M reductase (MCR) I that catalyzes the reductive cleavage of methyl-coenzyme M (CoM-S-CH3 or 2-(methylthio)ethanesulfonate) using coenzyme B (CoB or 7-mercaptoheptanoylthreonine phosphate) as reductant which results in the production of methane and the mixed heterodisulfide of CoB and CoM (CoM-S-S-CoB). This is the final step in methanogenesis. The polypeptide is Methyl-coenzyme M reductase subunit beta (mcrB) (Methanococcus voltae).